A 160-amino-acid polypeptide reads, in one-letter code: Ubiquitin-like protein ATG12 (160 aa).

The tract at residues 1–40 (MSETPKDQGPSSPSPSPSPSAASPMPLADNEVAGSGASSP) is disordered. Gly160 is covalently cross-linked (Glycyl lysine isopeptide (Gly-Lys) (interchain with K-102 in ATG5)).

This sequence belongs to the ATG12 family. As to quaternary structure, forms a conjugate with ATG5. Forms a thioester bond with the 'Cys-196' of ATG10. Interacts with the ATG7 C-terminal 40 amino acids domain. The ATG12-ATG5 conjugate forms a complex with several units of ATG16. The ATG12-ATG5 conjugate also associates with ATG3.

The protein resides in the preautophagosomal structure membrane. Ubiquitin-like protein involved in cytoplasm to vacuole transport (Cvt), autophagy vesicles formation, mitophagy, and nucleophagy. Conjugation with ATG5 through a ubiquitin-like conjugating system involving also ATG7 as an E1-like activating enzyme and ATG10 as an E2-like conjugating enzyme, is essential for its function. The ATG12-ATG5 conjugate acts as an E3-like enzyme which is required for lipidation of ATG8 and ATG8 association to the vesicle membranes. ATG12-ATG5 rearranges the ATG3 catalytic center and enhances its E2 activity. Autophagy is required for proper vegetative growth, asexual/sexual reproduction, and full virulence. Autophagy is particularly involved in the biosynthesis of deoxynivalenol (DON), an important virulence determinant. The protein is Ubiquitin-like protein ATG12 of Gibberella zeae (strain ATCC MYA-4620 / CBS 123657 / FGSC 9075 / NRRL 31084 / PH-1) (Wheat head blight fungus).